A 622-amino-acid chain; its full sequence is MIMDTNAVSFRARDEVTTQLAPGTGGQAVPTSNGMMTRFAMSESSLTDLLHKAATQYPNRAAYKFIDYDVNPDGFTETLTWWQIYRRAKIVAEELRGYGASGDRVAVLAPQGLEYIIAFLGVLEAGLIAVPLPVPQFGIHDERISAALQDSTPSVILTTSPVIDEVTKYAPHARAGQGGTPIVVAVDLLDLDSARELDLTPPAHSSTAYLQYTSGSTRSPAGVVLSHKNVITNCVQLMSDYLGETEKVPSTAVSWLPFYHDMGLMLGIILPMINQDTAVLLNPMAFLQRPARWMQLMGKFRGQISCAPNFGFELAVRRTSDEDMAGLDLGHVRGIGSGAERVNPATLQRFIDRFAPFNLRDTAIRPSYGLAEATVFVATAEPGRPPRSVNFDYQSLSVGRVERCANEADDGAKLVSYGSSWTSEVRIVDPEARTECPAGTVGEIWVQGDNVAMGYWRNPQLTERTFDAKLTDPSPGTSIGPWLRTGDLGVMFEGELFITGRIKDLLIVDGSNHYPDDIESTIQEITGGRVVAIAVPDADGEKLVTIVEFASWGHSGQEAIDKLRSVKREITSAISRAHRVRVADVVLVATGSIPVTTSGKVRRSSCAERYRNDGFTRLDRSA.

Belongs to the ATP-dependent AMP-binding enzyme family.

It catalyses the reaction 17-(4-hydroxyphenyl)heptadecanoate + holo-[(phenol)carboxyphthiodiolenone synthase] + ATP = 17-(4-hydroxyphenyl)heptadecanoyl-[(phenol)carboxyphthiodiolenone synthase] + AMP + diphosphate. It carries out the reaction 19-(4-hydroxyphenyl)nonadecanoate + holo-[(phenol)carboxyphthiodiolenone synthase] + ATP = 19-(4-hydroxyphenyl)nonadecanoyl-[(phenol)carboxyphthiodiolenone synthase] + AMP + diphosphate. It functions in the pathway lipid metabolism; fatty acid biosynthesis. Its function is as follows. Catalyzes the activation of long-chain fatty acids as acyl-adenylates (acyl-AMP), which are then transferred to the multifunctional polyketide synthase PpsA for further chain extension. Involved in the biosynthesis of phenolphthiocerol, which is an important intermediate in the biosynthesis of phenolic glycolipid (PGL), also called mycosid B. In Mycobacterium marinum (strain ATCC BAA-535 / M), this protein is 4-hydroxyphenylalkanoate adenylyltransferase (fadD29).